A 166-amino-acid polypeptide reads, in one-letter code: Putative esterase sll0410 (166 aa).

Asp45 is a catalytic residue.

Belongs to the 4-hydroxybenzoyl-CoA thioesterase family.

In Synechocystis sp. (strain ATCC 27184 / PCC 6803 / Kazusa), this protein is Putative esterase sll0410.